The following is a 60-amino-acid chain: UPF0434 protein YcaR (60 aa).

Belongs to the UPF0434 family.

This chain is UPF0434 protein YcaR, found in Salmonella arizonae (strain ATCC BAA-731 / CDC346-86 / RSK2980).